Consider the following 310-residue polypeptide: Junctional adhesion molecule C (310 aa).

An N-terminal signal peptide occupies residues 1 to 31 (MALSRRLRLRLCARLPDFFLLLLFRGCVIEA). Topologically, residues 32-241 (VNLKSSNRNP…GQDMEVYDLN (210 aa)) are extracellular. An Ig-like V-type domain is found at 35–127 (KSSNRNPVVH…VALNDRKEVD (93 aa)). 2 disulfide bridges follow: cysteine 53-cysteine 115 and cysteine 160-cysteine 219. N-linked (GlcNAc...) asparagine glycans are attached at residues asparagine 104 and asparagine 192. An Ig-like C2-type domain is found at 139-236 (PVAPVCRVPK…AARCEGQDME (98 aa)). A helical membrane pass occupies residues 242-262 (IAGIIGGVLVVLIVLAVITMG). Residues 263–310 (ICCAYRRGCFISSKQDGESYKSPGKHEGVNYIRTSEEGDFRHKSSFVI) are Cytoplasmic-facing. S-palmitoyl cysteine attachment occurs at residues cysteine 264 and cysteine 265.

The protein belongs to the immunoglobulin superfamily. Interacts with ITGAM. Interacts with GORASP2. Post-translationally, proteolytically cleaved from endothelial cells surface into a soluble form by ADAM10 and ADAM17; the release of soluble JAM3 is increased by pro-inflammatory factors. S-palmitoylated by ZDHHC7. S-palmitoylation promotes expression at tight junctions.

The protein resides in the cell membrane. It localises to the cell junction. Its subcellular location is the desmosome. The protein localises to the tight junction. It is found in the secreted. In terms of biological role, junctional adhesion protein that mediates heterotypic cell-cell interactions with its cognate receptor JAM2 to regulate different cellular processes. Plays a role in homing and mobilization of hematopoietic stem and progenitor cells within the bone marrow. At the surface of bone marrow stromal cells, it contributes to the retention of the hematopoietic stem and progenitor cells expressing JAM3. Plays a central role in leukocytes extravasation by facilitating transmigration through the endothelium. Plays a role in spermatogenesis where JAM2 and JAM3, which are respectively expressed by Sertoli and germ cells, mediate an interaction between both cell types and play an essential role in the anchorage of germ cells onto Sertoli cells and the assembly of cell polarity complexes during spermatid differentiation. Also functions as a counter-receptor for ITGAM, mediating leukocyte-platelet interactions and is involved in the regulation of transepithelial migration of polymorphonuclear neutrophils (PMN). Plays a role in angiogenesis. Plays a role in the regulation of cell migration. During myogenesis, it is involved in myocyte fusion. Its function is as follows. Promotes chemotaxis of vascular endothelial cells and stimulates angiogenesis. The protein is Junctional adhesion molecule C (Jam3) of Rattus norvegicus (Rat).